We begin with the raw amino-acid sequence, 349 residues long: MDFELEPTLEELIKQDTLKWIFVGGKGGVGKTTTSSSIAVQLALQHPEDEFLLISTDPAHNLSDAFCQKFGKDARKVEGLSNLSCMEIDPEAAMSDLQQQAQQYNNDPNDPLKSMMNDMTGSIPGIDEALSFMEVLKHIKNQKVTESDTKDKVSYRTIIFDTAPTGHTLRFLQLPTTLQKLLGKFQQLSGKLGPMMSMLGGGAQGQQDMFAKLNEVQKNVEEVNEQFTNPDLTTFVCVCISEFLSLYETERMIQELMSYKMDVNSIVVNQLLFADDDENPCKRCVARWKMQKKYLDQMAELYEDYHLVKMPLLGSEIRGVDNLKRFSQFLIKPYDPKVDRAIITDLKEQ.

Lysine 26–threonine 33 contacts ATP. The active site involves aspartate 57. ATP contacts are provided by glutamate 242 and asparagine 269. Positions 281 and 284 each coordinate Zn(2+).

Belongs to the arsA ATPase family. As to quaternary structure, homodimer. Component of the Golgi to ER traffic (GET) complex, which is composed of GET1, GET2 and GET3. Within the complex, GET1 and GET2 form a heterotetramer which is stabilized by phosphatidylinositol binding and which binds to the GET3 homodimer. Interacts with the chloride channel protein GEF1.

The protein resides in the cytoplasm. It is found in the endoplasmic reticulum. The protein localises to the golgi apparatus. Its function is as follows. ATPase required for the post-translational delivery of tail-anchored (TA) proteins to the endoplasmic reticulum. Recognizes and selectively binds the transmembrane domain of TA proteins in the cytosol. This complex then targets to the endoplasmic reticulum by membrane-bound receptors GET1 and GET2, where the tail-anchored protein is released for insertion. This process is regulated by ATP binding and hydrolysis. ATP binding drives the homodimer towards the closed dimer state, facilitating recognition of newly synthesized TA membrane proteins. ATP hydrolysis is required for insertion. Subsequently, the homodimer reverts towards the open dimer state, lowering its affinity for the GET1-GET2 receptor, and returning it to the cytosol to initiate a new round of targeting. Cooperates with the HDEL receptor ERD2 to mediate the ATP-dependent retrieval of resident ER proteins that contain a C-terminal H-D-E-L retention signal from the Golgi to the ER. Involved in low-level resistance to the oxyanions arsenite and arsenate, and in heat tolerance. In Candida tropicalis (strain ATCC MYA-3404 / T1) (Yeast), this protein is ATPase GET3.